We begin with the raw amino-acid sequence, 273 residues long: Bifunctional protein FolD (273 aa).

NADP(+) is bound by residues 155-157 (GRS), S182, and I223.

Belongs to the tetrahydrofolate dehydrogenase/cyclohydrolase family. In terms of assembly, homodimer.

The enzyme catalyses (6R)-5,10-methylene-5,6,7,8-tetrahydrofolate + NADP(+) = (6R)-5,10-methenyltetrahydrofolate + NADPH. It catalyses the reaction (6R)-5,10-methenyltetrahydrofolate + H2O = (6R)-10-formyltetrahydrofolate + H(+). The protein operates within one-carbon metabolism; tetrahydrofolate interconversion. In terms of biological role, catalyzes the oxidation of 5,10-methylenetetrahydrofolate to 5,10-methenyltetrahydrofolate and then the hydrolysis of 5,10-methenyltetrahydrofolate to 10-formyltetrahydrofolate. In Pseudothermotoga lettingae (strain ATCC BAA-301 / DSM 14385 / NBRC 107922 / TMO) (Thermotoga lettingae), this protein is Bifunctional protein FolD.